The chain runs to 283 residues: Succinate dehydrogenase [ubiquinone] iron-sulfur subunit, mitochondrial (283 aa).

Positions 66 to 145 (KKPTLQTYSI…PVKIYPLPHM (80 aa)) constitute a 2Fe-2S ferredoxin-type domain. Cysteine 105, cysteine 110, cysteine 113, and cysteine 125 together coordinate [2Fe-2S] cluster. The 31-residue stretch at 186–216 (DRKKLDGMYECILCACCSTSCPSYWWNQDEY) folds into the 4Fe-4S ferredoxin-type domain. [4Fe-4S] cluster-binding residues include cysteine 196, cysteine 199, and cysteine 202. Cysteine 206 lines the [3Fe-4S] cluster pocket. Tryptophan 211 provides a ligand contact to a ubiquinone. Positions 253 and 259 each coordinate [3Fe-4S] cluster. Cysteine 263 contributes to the [4Fe-4S] cluster binding site.

It belongs to the succinate dehydrogenase/fumarate reductase iron-sulfur protein family. In terms of assembly, component of complex II composed of four subunits: a flavoprotein (FP), an iron-sulfur protein (IP), and a cytochrome b composed of a large and a small subunit. [2Fe-2S] cluster is required as a cofactor. Requires [3Fe-4S] cluster as cofactor. It depends on [4Fe-4S] cluster as a cofactor.

The protein resides in the mitochondrion inner membrane. It carries out the reaction a quinone + succinate = fumarate + a quinol. Its pathway is carbohydrate metabolism; tricarboxylic acid cycle; fumarate from succinate (eukaryal route): step 1/1. Iron-sulfur protein (IP) subunit of succinate dehydrogenase (SDH) that is involved in complex II of the mitochondrial electron transport chain and is responsible for transferring electrons from succinate to ubiquinone (coenzyme Q). The polypeptide is Succinate dehydrogenase [ubiquinone] iron-sulfur subunit, mitochondrial (SDH2) (Uromyces fabae (Rust fungus)).